Here is a 338-residue protein sequence, read N- to C-terminus: NADPH dehydrogenase (338 aa).

23 to 26 is a binding site for FMN; sequence SPMC. Position 28 (Tyr-28) interacts with substrate. Residues Ala-60 and Gln-102 each contribute to the FMN site. 164-167 lines the substrate pocket; sequence HAAH. FMN is bound by residues Arg-215 and 307 to 308; that span reads GR.

The protein belongs to the NADH:flavin oxidoreductase/NADH oxidase family. NamA subfamily. As to quaternary structure, homotetramer. Composed of a dimer of active dimers. Requires FMN as cofactor.

The catalysed reaction is A + NADPH + H(+) = AH2 + NADP(+). Its activity is regulated as follows. Inhibited by p-hydroxybenzaldehyde (pHBA) and p-nitrophenol (pNP). Catalyzes the reduction of the double bond of an array of alpha,beta-unsaturated aldehydes and ketones. It also reduces the nitro group of nitroester and nitroaromatic compounds. It could have a role in detoxification processes. In Bacillus subtilis (strain 168), this protein is NADPH dehydrogenase (namA).